We begin with the raw amino-acid sequence, 448 residues long: Probable glycine dehydrogenase (decarboxylating) subunit 1 (448 aa).

The protein belongs to the GcvP family. N-terminal subunit subfamily. The glycine cleavage system is composed of four proteins: P, T, L and H. In this organism, the P 'protein' is a heterodimer of two subunits.

It carries out the reaction N(6)-[(R)-lipoyl]-L-lysyl-[glycine-cleavage complex H protein] + glycine + H(+) = N(6)-[(R)-S(8)-aminomethyldihydrolipoyl]-L-lysyl-[glycine-cleavage complex H protein] + CO2. Its function is as follows. The glycine cleavage system catalyzes the degradation of glycine. The P protein binds the alpha-amino group of glycine through its pyridoxal phosphate cofactor; CO(2) is released and the remaining methylamine moiety is then transferred to the lipoamide cofactor of the H protein. This chain is Probable glycine dehydrogenase (decarboxylating) subunit 1, found in Bacillus licheniformis (strain ATCC 14580 / DSM 13 / JCM 2505 / CCUG 7422 / NBRC 12200 / NCIMB 9375 / NCTC 10341 / NRRL NRS-1264 / Gibson 46).